The sequence spans 581 residues: Proline--tRNA ligase (581 aa).

It belongs to the class-II aminoacyl-tRNA synthetase family. ProS type 1 subfamily. In terms of assembly, homodimer.

Its subcellular location is the cytoplasm. It catalyses the reaction tRNA(Pro) + L-proline + ATP = L-prolyl-tRNA(Pro) + AMP + diphosphate. Catalyzes the attachment of proline to tRNA(Pro) in a two-step reaction: proline is first activated by ATP to form Pro-AMP and then transferred to the acceptor end of tRNA(Pro). As ProRS can inadvertently accommodate and process non-cognate amino acids such as alanine and cysteine, to avoid such errors it has two additional distinct editing activities against alanine. One activity is designated as 'pretransfer' editing and involves the tRNA(Pro)-independent hydrolysis of activated Ala-AMP. The other activity is designated 'posttransfer' editing and involves deacylation of mischarged Ala-tRNA(Pro). The misacylated Cys-tRNA(Pro) is not edited by ProRS. The protein is Proline--tRNA ligase of Rhodococcus erythropolis (strain PR4 / NBRC 100887).